The sequence spans 571 residues: Chaperonin GroEL 1 (571 aa).

ATP contacts are provided by residues 29–32 (TLGP), Lys-50, 86–90 (DGTTT), Gly-416, and Asp-498.

Belongs to the chaperonin (HSP60) family. In terms of assembly, forms a cylinder of 14 subunits composed of two heptameric rings stacked back-to-back. Interacts with the co-chaperonin GroES.

The protein localises to the cytoplasm. It carries out the reaction ATP + H2O + a folded polypeptide = ADP + phosphate + an unfolded polypeptide.. Functionally, together with its co-chaperonin GroES, plays an essential role in assisting protein folding. The GroEL-GroES system forms a nano-cage that allows encapsulation of the non-native substrate proteins and provides a physical environment optimized to promote and accelerate protein folding. This chain is Chaperonin GroEL 1, found in Rhodopirellula baltica (strain DSM 10527 / NCIMB 13988 / SH1).